Consider the following 151-residue polypeptide: Small ribosomal subunit protein uS9 (151 aa).

It belongs to the universal ribosomal protein uS9 family.

The polypeptide is Small ribosomal subunit protein uS9 (RpS16) (Spodoptera frugiperda (Fall armyworm)).